Reading from the N-terminus, the 544-residue chain is ATP-dependent RNA helicase DBP9 (544 aa).

Positions 9-37 (KSFDSFGLDDRLLSGLAACDMKQPTLIQN) match the Q motif motif. The region spanning 41-214 (PLALDKGVDI…QQFCRSTVAS (174 aa)) is the Helicase ATP-binding domain. 54 to 61 (AVTGSGKT) lines the ATP pocket. Positions 162-165 (DEAD) match the DEAD box motif. Residues 225-430 (KLLQYYVKCS…PYSFDMKQVE (206 aa)) form the Helicase C-terminal domain. A disordered region spans residues 525–544 (HKKYTKKKKGGDPLKFKKRK). A compositionally biased stretch (basic and acidic residues) spans 534–544 (GGDPLKFKKRK).

The protein belongs to the DEAD box helicase family. DDX56/DBP9 subfamily.

It localises to the nucleus. The protein localises to the nucleolus. The enzyme catalyses ATP + H2O = ADP + phosphate + H(+). ATP-binding RNA helicase involved in the biogenesis of 60S ribosomal subunits and is required for the normal formation of 25S and 5.8S rRNAs. This Yarrowia lipolytica (strain CLIB 122 / E 150) (Yeast) protein is ATP-dependent RNA helicase DBP9 (DBP9).